The following is a 1155-amino-acid chain: DNA-directed RNA polymerase subunit beta (1155 aa).

The protein belongs to the RNA polymerase beta chain family. In terms of assembly, the RNAP catalytic core consists of 2 alpha, 1 beta, 1 beta' and 1 omega subunit. When a sigma factor is associated with the core the holoenzyme is formed, which can initiate transcription.

The catalysed reaction is RNA(n) + a ribonucleoside 5'-triphosphate = RNA(n+1) + diphosphate. DNA-dependent RNA polymerase catalyzes the transcription of DNA into RNA using the four ribonucleoside triphosphates as substrates. The polypeptide is DNA-directed RNA polymerase subunit beta (Thermobifida fusca (strain YX)).